Consider the following 557-residue polypeptide: Eudesmanediol synthase (557 aa).

The Mg(2+) site is built by Asp-310 and Asp-314. Residues Asp-310, Asp-314, and Arg-450 each coordinate substrate. The DDXXD motif motif lies at 310-314; sequence DDTFD. The Mg(2+) site is built by Asn-453 and Ser-457.

This sequence belongs to the terpene synthase family. In terms of assembly, monomer. Mg(2+) is required as a cofactor. Requires Mn(2+) as cofactor.

The protein resides in the cytoplasm. It carries out the reaction (2E,6E)-farnesyl diphosphate + 2 H2O = 7-epi-ent-eudesmane-5,11-diol + diphosphate. The protein operates within secondary metabolite biosynthesis; terpenoid biosynthesis. Its function is as follows. Component of the volatile terpenes biosynthesis pathways. Dihydroxylated sesquiterpenoid synthase that generates dually hydroxylated products directly from (E,E)-farnesyl diphosphate, primarily eudesmane-2,11-diol, along with two closely related structural isomers. This is Eudesmanediol synthase from Zea mays (Maize).